The chain runs to 41 residues: Histone H2B.3, sperm (41 aa).

The interval 1-41 is disordered; it reads MPRSPSKSSPKKGSPRKASPKRGGKGAKRAGKGGRRRTVVK. 4 consecutive short sequence motifs (SPKK motif) follow at residues 4 to 7, 9 to 12, 14 to 17, and 19 to 22; these read SPSK, SPKK, SPRK, and SPKR. Over residues 9-41 the composition is skewed to basic residues; it reads SPKKGSPRKASPKRGGKGAKRAGKGGRRRTVVK. 2 positions are modified to phosphoserine: S14 and S19.

Belongs to the histone H2B family. As to quaternary structure, the nucleosome is a histone octamer containing two molecules each of H2A, H2B, H3 and H4 assembled in one H3-H4 heterotetramer and two H2A-H2B heterodimers. The octamer wraps approximately 147 bp of DNA. In terms of processing, monoubiquitination gives a specific tag for epigenetic transcriptional activation and is also prerequisite for histone H3 'Lys-4' and 'Lys-79' methylation. Post-translationally, phosphorylated on SPKK motifs 3 and 4; which may regulate DNA binding. Dephosphorylated during maturation of spermatids to mature sperm and rephosphorylated at fertilization.

The protein resides in the nucleus. The protein localises to the chromosome. Core component of nucleosome. Nucleosomes wrap and compact DNA into chromatin, limiting DNA accessibility to the cellular machineries which require DNA as a template. Histones thereby play a central role in transcription regulation, DNA repair, DNA replication and chromosomal stability. DNA accessibility is regulated via a complex set of post-translational modifications of histones, also called histone code, and nucleosome remodeling. This chain is Histone H2B.3, sperm, found in Echinus esculentus (Sea urchin).